The following is a 449-amino-acid chain: Tapasin (449 aa).

The signal sequence occupies residues 1 to 20; it reads MKPLSLLLAVASALGTAVSA. Residues 21–413 lie on the Lumenal side of the membrane; it reads GPAVIECWMV…GLSGPSLEDS (393 aa). Cysteine 27 and cysteine 91 are oxidised to a cystine. Asparagine 253 is a glycosylation site (N-linked (GlcNAc...) asparagine). Residues 292–399 form the Ig-like C1-type domain; sequence PKISLTPAPL…PTLGRSAEVT (108 aa). A disulfide bridge connects residues cysteine 315 and cysteine 382. Residues 414 to 434 traverse the membrane as a helical segment; it reads VGLFLSAFLLLGLIKALGWVA. At 435–449 the chain is on the cytoplasmic side; the sequence is ASRSTSKDPKEKKAQ.

In terms of assembly, heterodimer with PDIA3; disulfide-linked. Obligatory mediator for the interaction between newly assembled MHC class I molecules, calreticulin, PDIA3 and TAP. Up to 4 MHC class I/tapasin complexes bind to 1 TAP. Interacts with HLA-G-B2M complex; this interaction is required for loading of high affinity peptides. On its own or as part of MHC class I peptide loading complex, interacts with ligand-free MR1 or MR1-B2M complex, providing for stable MR1 pools ready for metabolite antigen processing.

It is found in the endoplasmic reticulum membrane. Its function is as follows. Involved in the association of MHC class I with transporter associated with antigen processing (TAP) and in the assembly of MHC class I with peptide (peptide loading). The protein is Tapasin (TAPBP) of Canis lupus familiaris (Dog).